The primary structure comprises 539 residues: Chaperonin GroEL (539 aa).

Residues 29 to 32 (TLGP), 86 to 90 (DGTTT), Gly-413, 476 to 478 (NAA), and Asp-492 contribute to the ATP site.

Belongs to the chaperonin (HSP60) family. Forms a cylinder of 14 subunits composed of two heptameric rings stacked back-to-back. Interacts with the co-chaperonin GroES.

The protein resides in the cytoplasm. It carries out the reaction ATP + H2O + a folded polypeptide = ADP + phosphate + an unfolded polypeptide.. Together with its co-chaperonin GroES, plays an essential role in assisting protein folding. The GroEL-GroES system forms a nano-cage that allows encapsulation of the non-native substrate proteins and provides a physical environment optimized to promote and accelerate protein folding. This chain is Chaperonin GroEL, found in Parageobacillus thermoglucosidasius (Geobacillus thermoglucosidasius).